Reading from the N-terminus, the 140-residue chain is Methylglyoxal synthase (140 aa).

The MGS-like domain maps to Met-1–Phe-140. Substrate is bound by residues His-8, Lys-12, Thr-34 to Thr-37, and Ser-54 to Gly-55. The active-site Proton donor/acceptor is Asp-60. His-87 is a substrate binding site.

This sequence belongs to the methylglyoxal synthase family.

It catalyses the reaction dihydroxyacetone phosphate = methylglyoxal + phosphate. Catalyzes the formation of methylglyoxal from dihydroxyacetone phosphate. The polypeptide is Methylglyoxal synthase (Enterococcus faecalis (strain ATCC 700802 / V583)).